The sequence spans 130 residues: Small ribosomal subunit protein uS9 (130 aa).

It belongs to the universal ribosomal protein uS9 family.

This Lawsonia intracellularis (strain PHE/MN1-00) protein is Small ribosomal subunit protein uS9.